We begin with the raw amino-acid sequence, 147 residues long: Deoxyuridine 5'-triphosphate nucleotidohydrolase (147 aa).

Residues 67 to 69 (RSG), asparagine 80, and 84 to 86 (TID) contribute to the substrate site.

The protein belongs to the dUTPase family. Requires Mg(2+) as cofactor.

It carries out the reaction dUTP + H2O = dUMP + diphosphate + H(+). It participates in pyrimidine metabolism; dUMP biosynthesis; dUMP from dCTP (dUTP route): step 2/2. This enzyme is involved in nucleotide metabolism: it produces dUMP, the immediate precursor of thymidine nucleotides and it decreases the intracellular concentration of dUTP so that uracil cannot be incorporated into DNA. The chain is Deoxyuridine 5'-triphosphate nucleotidohydrolase from Anaeromyxobacter dehalogenans (strain 2CP-1 / ATCC BAA-258).